Consider the following 356-residue polypeptide: Golgi-resident adenosine 3',5'-bisphosphate 3'-phosphatase (356 aa).

Position 1 is an N-acetylmethionine (Met1). Over 1 to 12 (MAPMGIRLSPLG) the chain is Cytoplasmic. Residues 13–33 (VAVFFLLGLGVLYHLYSGFLA) traverse the membrane as a helical segment. Topologically, residues 34-356 (GRFSLFGLGS…KLPDLEKSGH (323 aa)) are lumenal. A disordered region spans residues 84–104 (ESNVLHEKSKGKTREGADDKM). Asp108 acts as the Proton acceptor in catalysis. Residues Glu131, Asp172, Leu174, and Asp175 each coordinate Mg(2+). The active-site Proton acceptor is Thr177. AMP contacts are provided by Ser240 and His243. Residue Asn257 is glycosylated (N-linked (GlcNAc...) asparagine). AMP-binding residues include Gly266 and Lys270. A Mg(2+)-binding site is contributed by Asp298.

It belongs to the inositol monophosphatase superfamily. It depends on Mg(2+) as a cofactor. Post-translationally, N-glycosylated. Contains N-linked glycan resistant to endoglycosydase H.

The protein resides in the golgi apparatus. It localises to the trans-Golgi network membrane. The catalysed reaction is adenosine 3',5'-bisphosphate + H2O = AMP + phosphate. It functions in the pathway sulfur metabolism. Strongly inhibited by lithium. Exhibits 3'-nucleotidase activity toward adenosine 3',5'-bisphosphate (PAP), namely hydrolyzes adenosine 3',5'-bisphosphate into adenosine 5'-monophosphate (AMP) and a phosphate. May play a role in the formation of skeletal elements derived through endochondral ossification, possibly by clearing adenosine 3',5'-bisphosphate produced by Golgi sulfotransferases during glycosaminoglycan sulfation. Has no activity toward 3'-phosphoadenosine 5'-phosphosulfate (PAPS) or inositol phosphate (IP) substrates including I(1)P, I(1,4)P2, I(1,3,4)P3, I(1,4,5)P3 and I(1,3,4,5)P4. The polypeptide is Golgi-resident adenosine 3',5'-bisphosphate 3'-phosphatase (Mus musculus (Mouse)).